We begin with the raw amino-acid sequence, 57 residues long: U-Asilidin(1)-Mar2a (57 aa).

A signal peptide spans M1–A24. 3 disulfides stabilise this stretch: C28–C44, C35–C48, and C43–C53.

Belongs to the asilidin-1 family. As to expression, expressed by the venom gland. Exclusively expressed in the venom thoracic glands (and not in body tissues).

Its subcellular location is the secreted. May act as a neurotoxin. The chain is U-Asilidin(1)-Mar2a from Machimus arthriticus (Breck robberfly).